The primary structure comprises 433 residues: N-lysine methyltransferase SMYD2 (433 aa).

In terms of domain architecture, SET spans 7-241 (GGLERFCSAG…PGDEVFTSYI (235 aa)). S-adenosyl-L-methionine is bound at residue 17-19 (KGR). 8 residues coordinate Zn(2+): C52, C55, C65, C68, C74, C78, H86, and C90. An MYND-type zinc finger spans residues 52–90 (CECCFARKEGLSKCGRCKQAFYCDVECQKEDWPLHKLEC). S-adenosyl-L-methionine contacts are provided by residues H137, 206–207 (NH), and 258–260 (YFF). S283 is modified (phosphoserine).

Belongs to the class V-like SAM-binding methyltransferase superfamily. In terms of assembly, interacts with RNA polymerase II and HELZ. Interacts with SIN3A and HDAC1. Interacts (via MYND-type zinc finger) with EPB41L3. Interacts (via SET domain) with p53/TP53. Interacts with RB1 and HSP90AA1.

The protein resides in the cytoplasm. It is found in the cytosol. It localises to the nucleus. It catalyses the reaction L-lysyl(4)-[histone H3] + 3 S-adenosyl-L-methionine = N(6),N(6),N(6)-trimethyl-L-lysyl(4)-[histone H3] + 3 S-adenosyl-L-homocysteine + 3 H(+). The enzyme catalyses L-lysyl-[protein] + S-adenosyl-L-methionine = N(6)-methyl-L-lysyl-[protein] + S-adenosyl-L-homocysteine + H(+). Its function is as follows. Protein-lysine N-methyltransferase that methylates both histones and non-histone proteins, including p53/TP53 and RB1. Specifically trimethylates histone H3 'Lys-4' (H3K4me3) in vivo. The activity requires interaction with HSP90alpha. Shows even higher methyltransferase activity on p53/TP53. Monomethylates 'Lys-370' of p53/TP53, leading to decreased DNA-binding activity and subsequent transcriptional regulation activity of p53/TP53. Monomethylates RB1 at 'Lys-860'. In Rattus norvegicus (Rat), this protein is N-lysine methyltransferase SMYD2 (Smyd2).